A 377-amino-acid chain; its full sequence is Protein MULTIPOLAR SPINDLE 1 (377 aa).

Residues 117–124 (LRRRFLRL) carry the Nuclear localization signal motif.

Expressed in roots, stems, leaves, inflorescences and seedlings. Strongly expressed in meiocytes.

It localises to the nucleus. It is found in the cytoplasm. The protein resides in the cytoskeleton. The protein localises to the spindle. In terms of biological role, involved in meiotic spindle organization in meiocytes thus regulating chromosome segregation. Required for formation of meiotic DNA double-strand breaks (DSBs) during early recombination processes. The chain is Protein MULTIPOLAR SPINDLE 1 from Arabidopsis thaliana (Mouse-ear cress).